The following is a 198-amino-acid chain: Holliday junction branch migration complex subunit RuvA (198 aa).

The tract at residues 1–63 (MYSYIIGVIT…EDASILYGFS (63 aa)) is domain I. The domain II stretch occupies residues 64-142 (SQKERELFNL…KDFVPSEKPV (79 aa)). The tract at residues 143 to 153 (NKEVKRSNDSE) is flexible linker. The domain III stretch occupies residues 153-198 (EFAREALLQLGYFKNDVDAFIENTDISGLSIEDIMKKAMKSLDSSR).

The protein belongs to the RuvA family. In terms of assembly, homotetramer. Forms an RuvA(8)-RuvB(12)-Holliday junction (HJ) complex. HJ DNA is sandwiched between 2 RuvA tetramers; dsDNA enters through RuvA and exits via RuvB. An RuvB hexamer assembles on each DNA strand where it exits the tetramer. Each RuvB hexamer is contacted by two RuvA subunits (via domain III) on 2 adjacent RuvB subunits; this complex drives branch migration. In the full resolvosome a probable DNA-RuvA(4)-RuvB(12)-RuvC(2) complex forms which resolves the HJ.

It is found in the cytoplasm. The RuvA-RuvB-RuvC complex processes Holliday junction (HJ) DNA during genetic recombination and DNA repair, while the RuvA-RuvB complex plays an important role in the rescue of blocked DNA replication forks via replication fork reversal (RFR). RuvA specifically binds to HJ cruciform DNA, conferring on it an open structure. The RuvB hexamer acts as an ATP-dependent pump, pulling dsDNA into and through the RuvAB complex. HJ branch migration allows RuvC to scan DNA until it finds its consensus sequence, where it cleaves and resolves the cruciform DNA. The protein is Holliday junction branch migration complex subunit RuvA of Finegoldia magna (strain ATCC 29328 / DSM 20472 / WAL 2508) (Peptostreptococcus magnus).